Consider the following 376-residue polypeptide: PqqA peptide cyclase (376 aa).

One can recognise a Radical SAM core domain in the interval V4–D219. 3 residues coordinate [4Fe-4S] cluster: C18, C22, and C25.

The protein belongs to the radical SAM superfamily. PqqE family. As to quaternary structure, interacts with PqqD. The interaction is necessary for activity of PqqE. [4Fe-4S] cluster serves as cofactor.

The catalysed reaction is [PQQ precursor protein] + S-adenosyl-L-methionine = E-Y cross-linked-[PQQ precursor protein] + 5'-deoxyadenosine + L-methionine + H(+). It functions in the pathway cofactor biosynthesis; pyrroloquinoline quinone biosynthesis. In terms of biological role, catalyzes the cross-linking of a glutamate residue and a tyrosine residue in the PqqA protein as part of the biosynthesis of pyrroloquinoline quinone (PQQ). The protein is PqqA peptide cyclase of Xanthomonas campestris pv. campestris (strain B100).